Reading from the N-terminus, the 68-residue chain is Large ribosomal subunit protein bL32 (68 aa).

Residues 1 to 21 (MAVQQNKVSKSRRNNRRAHDS) are disordered.

This sequence belongs to the bacterial ribosomal protein bL32 family.

This is Large ribosomal subunit protein bL32 from Roseobacter denitrificans (strain ATCC 33942 / OCh 114) (Erythrobacter sp. (strain OCh 114)).